A 783-amino-acid polypeptide reads, in one-letter code: Transcription factor Sp3 (783 aa).

A compositionally biased stretch (basic and acidic residues) spans 1 to 12 (MTAPEKPVKQEE). Residues 1–55 (MTAPEKPVKQEEMAALDVDGGGGGGGHGEYLQQQQQQQQQHGNGAAAAAAQDTQP) form a disordered region. Residues 19-28 (DGGGGGGGHG) are compositionally biased toward gly residues. A compositionally biased stretch (low complexity) spans 29–51 (EYLQQQQQQQQQHGNGAAAAAAQ). A Phosphoserine modification is found at serine 72. Lysine 122 is covalently cross-linked (Glycyl lysine isopeptide (Lys-Gly) (interchain with G-Cter in SUMO)). The tract at residues 140 to 239 (QYVLPLQNLQ…IPQTGQVQVQ (100 aa)) is transactivation domain (Gln-rich). Positions 302–340 (GQAMDSSDNSERTGERVSPDVNETNADTDLFVPTSSSSQ) are disordered. The segment covering 310–319 (NSERTGERVS) has biased composition (basic and acidic residues). Positions 322–340 (VNETNADTDLFVPTSSSSQ) are enriched in polar residues. Residues 352-501 (QQNTNSLTTT…TPVQTLTLGQ (150 aa)) are transactivation domain (Gln-rich). The 9aaTAD motif lies at 463-471 (ITWQTFQVQ). The tract at residues 536 to 622 (IQLHPGENAD…RGTNLGKKKQ (87 aa)) is repressor domain. Lysine 553 carries the post-translational modification N6-acetyllysine; alternate. Lysine 553 participates in a covalent cross-link: Glycyl lysine isopeptide (Lys-Gly) (interchain with G-Cter in SUMO); alternate. A Glycyl lysine isopeptide (Lys-Gly) (interchain with G-Cter in SUMO1); alternate cross-link involves residue lysine 553. A Glycyl lysine isopeptide (Lys-Gly) (interchain with G-Cter in SUMO2); alternate cross-link involves residue lysine 553. 2 positions are modified to phosphoserine: serine 565 and serine 568. A Glycyl lysine isopeptide (Lys-Gly) (interchain with G-Cter in SUMO2) cross-link involves residue lysine 595. Residues 623–647 (HICHIPGCGKVYGKTSHLRAHLRWH) form a C2H2-type 1 zinc finger. At serine 648 the chain carries Phosphoserine. 2 consecutive C2H2-type zinc fingers follow at residues 653 to 677 (FICNWMFCGKRFTRSDELQRHRRTH) and 683 to 705 (FVCPECSKRFMRSDHLAKHIKTH).

Belongs to the Sp1 C2H2-type zinc-finger protein family. In terms of assembly, interacts with HLTF; the interaction may be required for basal transcriptional activity of HLTF. Interacts with HDAC1; the interaction deacetylates SP3 and regulates its transcriptional activity. Interacts with HDAC2 (preferably the CK2-phosphorylated form); the interaction deacetylates SP3 and regulates its transcriptional activity. Ceramides can also regulate acetylation/deacetylation events through altering the interaction of HDAC with SP3. Interacts with MEIS2 isoform Meis2D and PBX1 isoform PBX1a. Acetylated by histone acetyltransferase p300, deacetylated by HDACs. Acetylation/deacetylation states regulate transcriptional activity. Acetylation appears to activate transcription. Alternate sumoylation and acetylation at Lys-553 also control transcriptional activity. In terms of processing, sumoylated on all isoforms. Sumoylated on 2 sites in longer isoforms with Lys-553 being the major site. Sumoylation at this site promotes nuclear localization to the nuclear periphery, nuclear dots and PML nuclear bodies. Sumoylation on Lys-553 represses the transactivation activity, except for the largest isoform which has little effect on transactivation. Alternate sumoylation and acetylation at Lys-553 also control transcriptional activity.

It localises to the nucleus. Its subcellular location is the PML body. Functionally, transcriptional factor that can act as an activator or repressor depending on isoform and/or post-translational modifications. Binds to GT and GC boxes promoter elements. Competes with SP1 for the GC-box promoters. Weak activator of transcription but can activate a number of genes involved in different processes such as cell-cycle regulation, hormone-induction and house-keeping. The protein is Transcription factor Sp3 (Sp3) of Mus musculus (Mouse).